The chain runs to 1187 residues: DNA-directed RNA polymerase subunit beta (1187 aa).

The tract at residues 1150–1187 (KDEDDDPASSADDLGFNIGARPDAAAKEDQKAEEPEYQ) is disordered. The span at 1173–1187 (AAAKEDQKAEEPEYQ) shows a compositional bias: basic and acidic residues.

This sequence belongs to the RNA polymerase beta chain family. The RNAP catalytic core consists of 2 alpha, 1 beta, 1 beta' and 1 omega subunit. When a sigma factor is associated with the core the holoenzyme is formed, which can initiate transcription.

It carries out the reaction RNA(n) + a ribonucleoside 5'-triphosphate = RNA(n+1) + diphosphate. DNA-dependent RNA polymerase catalyzes the transcription of DNA into RNA using the four ribonucleoside triphosphates as substrates. The polypeptide is DNA-directed RNA polymerase subunit beta (Bifidobacterium longum subsp. infantis (strain ATCC 15697 / DSM 20088 / JCM 1222 / NCTC 11817 / S12)).